The sequence spans 211 residues: Ribonuclease T (211 aa).

The Exonuclease domain maps to 24-198 (VVVDVETGGF…YDAEKTAHLF (175 aa)). Residues aspartate 27, glutamate 29, histidine 185, and aspartate 190 each coordinate Mg(2+). Histidine 185 (proton donor/acceptor) is an active-site residue.

This sequence belongs to the RNase T family. In terms of assembly, homodimer. Mg(2+) serves as cofactor.

Trims short 3' overhangs of a variety of RNA species, leaving a one or two nucleotide 3' overhang. Responsible for the end-turnover of tRNA: specifically removes the terminal AMP residue from uncharged tRNA (tRNA-C-C-A). Also appears to be involved in tRNA biosynthesis. The protein is Ribonuclease T of Xylella fastidiosa (strain Temecula1 / ATCC 700964).